The following is a 395-amino-acid chain: Dihydroorotate dehydrogenase (quinone), mitochondrial (395 aa).

The transit peptide at 1–10 (MAWRHLKKRA) directs the protein to the mitochondrion; not cleaved. Over 1-10 (MAWRHLKKRA) the chain is Mitochondrial matrix. The chain crosses the membrane as a helical span at residues 11–30 (QDAVIILGGGGLLFASYLMA). At 31–395 (TGDERFYAEH…TDAIGADHRR (365 aa)) the chain is on the mitochondrial intermembrane side. Residues 95–99 (AGFDK) and S119 each bind FMN. K99 serves as a coordination point for substrate. Residue 144 to 148 (NRYGF) participates in substrate binding. Residues N180 and N211 each contribute to the FMN site. Position 211–216 (211–216 (NVSSPN)) interacts with substrate. S214 (nucleophile) is an active-site residue. Positions 254 and 282 each coordinate FMN. Position 283-284 (283-284 (NT)) interacts with substrate. FMN is bound by residues G305, G334, and 355–356 (YT).

This sequence belongs to the dihydroorotate dehydrogenase family. Type 2 subfamily. In terms of assembly, monomer. FMN serves as cofactor. In terms of processing, the uncleaved transit peptide is required for mitochondrial targeting and proper membrane integration.

The protein localises to the mitochondrion inner membrane. It carries out the reaction (S)-dihydroorotate + a quinone = orotate + a quinol. It participates in pyrimidine metabolism; UMP biosynthesis via de novo pathway; orotate from (S)-dihydroorotate (quinone route): step 1/1. Functionally, catalyzes the conversion of dihydroorotate to orotate with quinone as electron acceptor. Required for UMP biosynthesis via de novo pathway. This chain is Dihydroorotate dehydrogenase (quinone), mitochondrial (DHODH), found in Homo sapiens (Human).